The sequence spans 116 residues: NADH-ubiquinone oxidoreductase chain 3 (116 aa).

The next 3 membrane-spanning stretches (helical) occupy residues 3–23 (LITTIITITITLSAVLATVSF), 56–76 (FFLIAILFLLFDLEIALLLPL), and 87–107 (LTLVWSTAVLALLTLGLIYEW).

The protein belongs to the complex I subunit 3 family.

Its subcellular location is the mitochondrion membrane. The enzyme catalyses a ubiquinone + NADH + 5 H(+)(in) = a ubiquinol + NAD(+) + 4 H(+)(out). Core subunit of the mitochondrial membrane respiratory chain NADH dehydrogenase (Complex I) that is believed to belong to the minimal assembly required for catalysis. Complex I functions in the transfer of electrons from NADH to the respiratory chain. The immediate electron acceptor for the enzyme is believed to be ubiquinone. In Oncorhynchus kisutch (Coho salmon), this protein is NADH-ubiquinone oxidoreductase chain 3 (MT-ND3).